Here is a 149-residue protein sequence, read N- to C-terminus: Cell division protein SepF (149 aa).

Belongs to the SepF family. In terms of assembly, homodimer. Interacts with FtsZ.

Its subcellular location is the cytoplasm. Its function is as follows. Cell division protein that is part of the divisome complex and is recruited early to the Z-ring. Probably stimulates Z-ring formation, perhaps through the cross-linking of FtsZ protofilaments. Its function overlaps with FtsA. In Clostridium perfringens (strain ATCC 13124 / DSM 756 / JCM 1290 / NCIMB 6125 / NCTC 8237 / Type A), this protein is Cell division protein SepF.